The chain runs to 248 residues: 4-hydroxy-tetrahydrodipicolinate reductase (248 aa).

NAD(+) contacts are provided by residues glycine 8–valine 13, aspartate 34, glycine 76–threonine 78, and alanine 103–phenylalanine 106. Histidine 133 (proton donor/acceptor) is an active-site residue. A (S)-2,3,4,5-tetrahydrodipicolinate-binding site is contributed by histidine 134. The Proton donor role is filled by lysine 137. Glycine 143 to threonine 144 is a (S)-2,3,4,5-tetrahydrodipicolinate binding site.

This sequence belongs to the DapB family.

The protein resides in the cytoplasm. It carries out the reaction (S)-2,3,4,5-tetrahydrodipicolinate + NAD(+) + H2O = (2S,4S)-4-hydroxy-2,3,4,5-tetrahydrodipicolinate + NADH + H(+). The catalysed reaction is (S)-2,3,4,5-tetrahydrodipicolinate + NADP(+) + H2O = (2S,4S)-4-hydroxy-2,3,4,5-tetrahydrodipicolinate + NADPH + H(+). It participates in amino-acid biosynthesis; L-lysine biosynthesis via DAP pathway; (S)-tetrahydrodipicolinate from L-aspartate: step 4/4. Its function is as follows. Catalyzes the conversion of 4-hydroxy-tetrahydrodipicolinate (HTPA) to tetrahydrodipicolinate. The sequence is that of 4-hydroxy-tetrahydrodipicolinate reductase from Corynebacterium urealyticum (strain ATCC 43042 / DSM 7109).